Consider the following 198-residue polypeptide: UPF0098 protein PH1269 (198 aa).

This sequence belongs to the UPF0098 family.

This Pyrococcus horikoshii (strain ATCC 700860 / DSM 12428 / JCM 9974 / NBRC 100139 / OT-3) protein is UPF0098 protein PH1269.